The primary structure comprises 109 residues: Large ribosomal subunit protein uL22 (109 aa).

Belongs to the universal ribosomal protein uL22 family. Part of the 50S ribosomal subunit.

Functionally, this protein binds specifically to 23S rRNA; its binding is stimulated by other ribosomal proteins, e.g. L4, L17, and L20. It is important during the early stages of 50S assembly. It makes multiple contacts with different domains of the 23S rRNA in the assembled 50S subunit and ribosome. In terms of biological role, the globular domain of the protein is located near the polypeptide exit tunnel on the outside of the subunit, while an extended beta-hairpin is found that lines the wall of the exit tunnel in the center of the 70S ribosome. This Azoarcus sp. (strain BH72) protein is Large ribosomal subunit protein uL22.